A 299-amino-acid chain; its full sequence is Homeobox protein Nkx-2.5 (299 aa).

Over residues 90–119 (KDPKDHKKDICPLQKTLEHDKREAEDPERP) the composition is skewed to basic and acidic residues. Residues 90–128 (KDPKDHKKDICPLQKTLEHDKREAEDPERPRQRKRRKPR) are disordered. Positions 124–183 (RRKPRVLFSQAQVYELERRFKQQKYLSAPERDHLANVLKLTSTQVKIWFQNRRYKCKRQR) form a DNA-binding region, homeobox.

It belongs to the NK-2 homeobox family. In terms of assembly, homodimer (via the homeobox); binds DNA as homodimer. As to expression, heart and gut tissue.

The protein resides in the nucleus. In terms of biological role, transcription factor required for the development of the heart and the spleen. Implicated in commitment to and/or differentiation of the myocardial lineage. May regulate the expression of genes involved in cardiogenesis and play a role in the formation of gut and the pharyngeal region. Binds to the core DNA motif of promoter. This chain is Homeobox protein Nkx-2.5 (nkx-2.5), found in Xenopus laevis (African clawed frog).